Here is a 313-residue protein sequence, read N- to C-terminus: Type II methyltransferase M.NlaX (313 aa).

The SAM-dependent MTase C5-type domain occupies 2 to 308 (FKIIDLFAGI…EQMKAALSAV (307 aa)). The active site involves C74.

The protein belongs to the class I-like SAM-binding methyltransferase superfamily. C5-methyltransferase family.

The enzyme catalyses a 2'-deoxycytidine in DNA + S-adenosyl-L-methionine = a 5-methyl-2'-deoxycytidine in DNA + S-adenosyl-L-homocysteine + H(+). In terms of biological role, a methylase, recognizes the double-stranded sequence 5'-CCNGG-3' and methylates C-2 on both strands. May be the equivalent of dcm in this bacteria, or it may protect the DNA from cleavage by the putative NlaXP endonuclease. This chain is Type II methyltransferase M.NlaX (nlaXM), found in Neisseria lactamica.